A 358-amino-acid chain; its full sequence is 3-dehydroquinate synthase (358 aa).

Residues 70–75 (DGEKFK), 104–108 (GVVGD), 128–129 (TT), Lys-141, Lys-150, and 168–171 (CLQT) each bind NAD(+). Glu-183, His-246, and His-263 together coordinate Zn(2+).

It belongs to the sugar phosphate cyclases superfamily. Dehydroquinate synthase family. Co(2+) serves as cofactor. The cofactor is Zn(2+). NAD(+) is required as a cofactor.

Its subcellular location is the cytoplasm. It carries out the reaction 7-phospho-2-dehydro-3-deoxy-D-arabino-heptonate = 3-dehydroquinate + phosphate. The protein operates within metabolic intermediate biosynthesis; chorismate biosynthesis; chorismate from D-erythrose 4-phosphate and phosphoenolpyruvate: step 2/7. In terms of biological role, catalyzes the conversion of 3-deoxy-D-arabino-heptulosonate 7-phosphate (DAHP) to dehydroquinate (DHQ). This Shewanella frigidimarina (strain NCIMB 400) protein is 3-dehydroquinate synthase.